The sequence spans 288 residues: Bis(5'-nucleosyl)-tetraphosphatase, symmetrical (288 aa).

This sequence belongs to the Ap4A hydrolase family.

The enzyme catalyses P(1),P(4)-bis(5'-adenosyl) tetraphosphate + H2O = 2 ADP + 2 H(+). Its function is as follows. Hydrolyzes diadenosine 5',5'''-P1,P4-tetraphosphate to yield ADP. The chain is Bis(5'-nucleosyl)-tetraphosphatase, symmetrical from Pseudomonas putida (strain ATCC 700007 / DSM 6899 / JCM 31910 / BCRC 17059 / LMG 24140 / F1).